A 450-amino-acid polypeptide reads, in one-letter code: F-box/FBD/LRR-repeat protein At5g22660 (450 aa).

The region spanning 12 to 58 is the F-box domain; it reads EDRISSLPDHLLSQILSNLPTENAVTTSILSTRWKDLWLSTPVLDID. 2 LRR repeats span residues 157 to 181 and 294 to 317; these read LPNLKVMHLEENIYSYAETMEKFIS and LSSLRDMTISGTTLKIICHYLKHE. An FBD domain is found at 364–416; sequence EEISLSSSVPKCLQSSLENVEIIRPNYGSGEEMKLSKYFLENSLVLKKFKLCR.

The sequence is that of F-box/FBD/LRR-repeat protein At5g22660 from Arabidopsis thaliana (Mouse-ear cress).